We begin with the raw amino-acid sequence, 540 residues long: MIKLPVLLADINIQSLPTEPELILNNLAITTLVENLIILLLVATLVALVARWLKIPYVIGLVLAGLAIPRGLSVGLNPELILNFFLPILIFEAAINTDISRLRSTIKPITVLAGPGVVISAAITAVLLKIGLGLAWVTAAGVSVILTITDTVSVIAAFRSVPVPRRLATIVEGESMLNDGVAMVLLSVITTIHIQGGFSAGEGIRQIFVAFVGGGLVGLGLGYLCVGLFRQLNDDLSDILLTVSVSLGTFQIGQMLGVSSAIAVVVAGLVIGNLALKQTSASIKVTLLSFWEYAGFGVNTLIFLLVGIEVYPSILLSTIPAALIAIVAYQIGRVFSIYPLLYLLSFFDRPLPLRWQHVLIAGNVKGSLSMALALALPLTLPGRDQVVTLVFSTVMVSLIGQGLSLPWVVKKLQLSKPSPLAQKIAMLQLNLVTAKAAQGELKYLLEAGSLPKFLYEELFADYQARIANSEQELREFYNQRNLIFSEGEVEKKYIDGLYRRLYIAEKSAINDALAKGILADDISDEYLQVLNEKLLALQDD.

10 consecutive transmembrane segments (helical) span residues 29–49 (ITTL…VALV), 71–91 (GLSV…ILIF), 117–137 (VVIS…LAWV), 138–158 (TAAG…IAAF), 207–227 (IFVA…LCVG), 256–276 (LGVS…NLAL), 296–316 (FGVN…SILL), 323–343 (LIAI…LLYL), 358–378 (VLIA…ALPL), and 389–409 (LVFS…PWVV).

Belongs to the monovalent cation:proton antiporter 1 (CPA1) transporter (TC 2.A.36) family.

It localises to the cell membrane. In terms of biological role, required for Na(+) uptake into the cell, especially at low external Na(+) concentrations or low Na(+)/K(+) ratios. May be part of a sodium cycle that permits re-entry of sodium into the cell. The chain is Na(+)/H(+) antiporter NhaS2 (nhaS2) from Synechocystis sp. (strain ATCC 27184 / PCC 6803 / Kazusa).